An 811-amino-acid chain; its full sequence is MKLSTSGLGQQGHEGEKCLNSELWHACAGPLVSLPSSGSRVVYFPQGHSEQVAATTNKEVDGHIPNYPSLPPQLICQLHNVTMHADVETDEVYAQMTLQPLTPEEQKETFVPIELGIPSKQPSNYFCKTLTASDTSTHGGFSVPRRAAEKVFPPLDYTLQPPAQELIARDLHDVEWKFRHIFRGQPKRHLLTTGWSVFVSAKRLVAGDSVIFIRNEKNQLFLGIRHATRPQTIVPSSVLSSDSMHIGLLAAAAHASATNSCFTVFFHPRASQSEFVIQLSKYIKAVFHTRISVGMRFRMLFETEESSVRRYMGTITGISDLDSVRWPNSHWRSVKVGWDESTAGERQPRVSLWEIEPLTTFPMYPSLFPLRLKRPWHAGTSSLPDGRGDLGSGLTWLRGGGGEQQGLLPLNYPSVGLFPWMQQRLDLSQMGTDNNQQYQAMLAAGLQNIGGGDPLRQQFVQLQEPHHQYLQQSASHNSDLMLQQQQQQQASRHLMHAQTQIMSENLPQQNMRQEVSNQPAGQQQQLQQPDQNAYLNAFKMQNGHLQQWQQQSEMPSPSFMKSDFTDSSNKFATTASPASGDGNLLNFSITGQSVLPEQLTTEGWSPKASNTFSEPLSLPQAYPGKSLALEPGNPQNPSLFGVDPDSGLFLPSTVPRFASSSGDAEASPMSLTDSGFQNSLYSCMQDTTHELLHGAGQINSSNQTKNFVKVYKSGSVGRSLDISRFSSYHELREELGKMFAIEGLLEDPLRSGWQLVFVDKENDILLLGDDPWESFVNNVWYIKILSPEDVHQMGDHGEGSGGLFPQNPTHL.

Positions 126-228 form a DNA-binding region, TF-B3; the sequence is FCKTLTASDT…QLFLGIRHAT (103 aa). Disordered regions lie at residues 467 to 496 and 544 to 565; these read HQYLQQSASHNSDLMLQQQQQQQASRHLMH and HLQQWQQQSEMPSPSFMKSDFT. Composition is skewed to polar residues over residues 469–482 and 544–555; these read YLQQSASHNSDLML and HLQQWQQQSEMP. One can recognise a PB1 domain in the interval 705-789; sequence KNFVKVYKSG…WYIKILSPED (85 aa).

The protein belongs to the ARF family. In terms of assembly, homodimers and heterodimers. Expressed in the whole plant.

The protein localises to the nucleus. Functionally, auxin response factors (ARFs) are transcriptional factors that bind specifically to the DNA sequence 5'-TGTCTC-3' found in the auxin-responsive promoter elements (AuxREs). Seems to act as transcriptional activator. Formation of heterodimers with Aux/IAA proteins may alter their ability to modulate early auxin response genes expression. Regulates both stamen and gynoecium maturation. Promotes jasmonic acid production. Partially redundant with ARF6. Involved in fruit initiation. Acts as an inhibitor to stop further carpel development in the absence of fertilization and the generation of signals required to initiate fruit and seed development. The protein is Auxin response factor 8 (ARF8) of Arabidopsis thaliana (Mouse-ear cress).